The sequence spans 188 residues: MTNYGAIPTSSHASPLVDVESLSRAKHRIKAGLATRRAWRVMFDFHSMGLPHGVSDAFTRIKTNLAYFRMNYAIVVLIVIFFSLIWHPTSLIVFTVLVVVWIFLYFLRDEPIKLFRFQIDDRTVLIVLSVLTVVLLLLTNATFNIVGALVTGAVLVLIHSVVRKTEDLFLDEEAATTETSGLTSYPST.

4 helical membrane passes run 74–94 (IVVL…LIVF), 95–115 (TVLV…IKLF), 123–143 (TVLI…NATF), and 145–165 (IVGA…VRKT).

The protein belongs to the PRA1 family. In terms of assembly, interacts with PRA1F2 and PRA1D. Interacts with ACD11 and BPA1. In terms of tissue distribution, expressed in lateral roots, lateral root caps and columella cells.

Its subcellular location is the endoplasmic reticulum membrane. The protein resides in the membrane. The protein localises to the cytoplasm. Its function is as follows. May be involved in both secretory and endocytic intracellular trafficking in the endosomal/prevacuolar compartments. The sequence is that of PRA1 family protein F3 from Arabidopsis thaliana (Mouse-ear cress).